The sequence spans 146 residues: Aspartate carbamoyltransferase regulatory chain (146 aa).

4 residues coordinate Zn(2+): Cys-102, Cys-107, Cys-131, and Cys-134.

Belongs to the PyrI family. As to quaternary structure, contains catalytic and regulatory chains. Requires Zn(2+) as cofactor.

In terms of biological role, involved in allosteric regulation of aspartate carbamoyltransferase. The sequence is that of Aspartate carbamoyltransferase regulatory chain from Clostridium botulinum (strain Okra / Type B1).